Here is a 169-residue protein sequence, read N- to C-terminus: Ribosome maturation factor RimM (169 aa).

Residues 97-169 (EDEVYFKDLI…KIVVDWEYDY (73 aa)) enclose the PRC barrel domain.

This sequence belongs to the RimM family. As to quaternary structure, binds ribosomal protein uS19.

It localises to the cytoplasm. Its function is as follows. An accessory protein needed during the final step in the assembly of 30S ribosomal subunit, possibly for assembly of the head region. Essential for efficient processing of 16S rRNA. May be needed both before and after RbfA during the maturation of 16S rRNA. It has affinity for free ribosomal 30S subunits but not for 70S ribosomes. This is Ribosome maturation factor RimM from Francisella tularensis subsp. holarctica (strain FTNF002-00 / FTA).